Consider the following 170-residue polypeptide: Probable T4-type lysozyme 2 (170 aa).

Glutamate 13 acts as the Proton donor in catalysis. Aspartate 22 functions as the Nucleophile in the catalytic mechanism.

It belongs to the glycosyl hydrolase 24 family.

The enzyme catalyses Hydrolysis of (1-&gt;4)-beta-linkages between N-acetylmuramic acid and N-acetyl-D-glucosamine residues in a peptidoglycan and between N-acetyl-D-glucosamine residues in chitodextrins.. This Dictyostelium discoideum (Social amoeba) protein is Probable T4-type lysozyme 2.